A 696-amino-acid chain; its full sequence is TBC1 domain family member 12 (696 aa).

N-acetylmethionine is present on Met1. 3 disordered regions span residues 1–59 (MMGP…PPPR), 91–121 (PAAR…RRRR), and 156–234 (CCLA…ARAR). The span at 46–55 (PPEEAGEEEA) shows a compositional bias: acidic residues. The segment covering 108–118 (RQDRRGPEEAR) has biased composition (basic and acidic residues). Ser205 bears the Phosphoserine mark. Residues 209-222 (LLPSAGPSAPLPAA) show a composition bias toward low complexity. The residue at position 236 (Ser236) is a Phosphoserine. The stretch at 330 to 373 (KSVEEALRHRQEYDEMVAEAKKREIKEAHKRKRIMKERFKQEES) forms a coiled coil. The Rab-GAP TBC domain maps to 405–613 (GLPPSVRGKV…RVWDVFCRDG (209 aa)). Ser668 bears the Phosphoserine mark. Thr669 bears the Phosphothreonine mark.

Interacts with RAB11A; this interaction recruits TBC1D12 to RAB11A-positive recycling endosomes.

It localises to the endosome. Its function is as follows. RAB11A-binding protein that plays a role in neurite outgrowth. This is TBC1 domain family member 12 (Tbc1d12) from Mus musculus (Mouse).